The sequence spans 279 residues: Methyltransferase prhM (279 aa).

S-adenosyl-L-methionine-binding positions include 124–125 and 152–153; these read DI and DV.

This sequence belongs to the class I-like SAM-binding methyltransferase superfamily.

It participates in secondary metabolite biosynthesis; terpenoid biosynthesis. Functionally, methyltransferase; part of the gene cluster that mediates the biosynthesis of paraherquonin, a meroterpenoid with a unique, highly congested hexacyclic molecular architecture. The first step of the pathway is the synthesis of 3,5-dimethylorsellinic acid (DMOA) by the polyketide synthase prhL. Synthesis of DMOA is followed by farnesylation by the prenyltransferase prhE, methylesterification by the methyl-transferase prhM, epoxidation of the prenyl chain by the flavin-dependent monooxygenase prhF, and cyclization of the farnesyl moiety by the terpene cyclase prhH, to yield the tetracyclic intermediate, protoaustinoid A. The short chain dehydrogenase prhI then oxidizes the C-3 alcohol group of the terpene cyclase product to transform protoaustinoid A into protoaustinoid B. The FAD-binding monooxygenase prhJ catalyzes the oxidation of protoaustinoid B into preaustinoid A which is further oxidized into preaustinoid A1 by FAD-binding monooxygenase phrK. Finally, prhA leads to berkeleydione via the berkeleyone B intermediate. PrhA is a multifunctional dioxygenase that first desaturates at C5-C6 to form berkeleyone B, followed by rearrangement of the A/B-ring to form the cycloheptadiene moiety in berkeleydione. Berkeleydione serves as the key intermediate for the biosynthesis of paraherquonin as well as many other meroterpenoids. The cytochrome P450 monooxygenases prhB, prhD, and prhN, as well as the isomerase prhC, are probably involved in the late stage of paraherquonin biosynthesis, after the production of berkeleydione. Especially prhC might be a multifunctional enzyme that catalyzes the D-ring expansion via intramolecular methoxy rearrangement, as well as the hydrolysis of the expanded D-ring. The protein is Methyltransferase prhM of Penicillium brasilianum.